The primary structure comprises 316 residues: Pantothenate kinase (316 aa).

Residue 95-102 (GSVAVGKS) coordinates ATP.

It belongs to the prokaryotic pantothenate kinase family.

The protein resides in the cytoplasm. It catalyses the reaction (R)-pantothenate + ATP = (R)-4'-phosphopantothenate + ADP + H(+). Its pathway is cofactor biosynthesis; coenzyme A biosynthesis; CoA from (R)-pantothenate: step 1/5. This is Pantothenate kinase from Yersinia pseudotuberculosis serotype O:3 (strain YPIII).